The sequence spans 191 residues: Peptidyl-tRNA hydrolase (191 aa).

Tyr-17 serves as a coordination point for tRNA. The active-site Proton acceptor is His-22. Residues Tyr-68, Asn-70, and Asn-116 each coordinate tRNA.

This sequence belongs to the PTH family. Monomer.

The protein resides in the cytoplasm. The enzyme catalyses an N-acyl-L-alpha-aminoacyl-tRNA + H2O = an N-acyl-L-amino acid + a tRNA + H(+). Its function is as follows. Hydrolyzes ribosome-free peptidyl-tRNAs (with 1 or more amino acids incorporated), which drop off the ribosome during protein synthesis, or as a result of ribosome stalling. Catalyzes the release of premature peptidyl moieties from peptidyl-tRNA molecules trapped in stalled 50S ribosomal subunits, and thus maintains levels of free tRNAs and 50S ribosomes. The protein is Peptidyl-tRNA hydrolase of Mycolicibacterium smegmatis (strain ATCC 700084 / mc(2)155) (Mycobacterium smegmatis).